A 254-amino-acid chain; its full sequence is Alcohol dehydrogenase 2 (254 aa).

NAD(+) is bound at residue 10 to 33 (FVAGLGGIGFDTSREIVKSGPKNL). Serine 138 is a binding site for substrate. The active-site Proton acceptor is tyrosine 151.

It belongs to the short-chain dehydrogenases/reductases (SDR) family. Homodimer.

It catalyses the reaction a primary alcohol + NAD(+) = an aldehyde + NADH + H(+). The enzyme catalyses a secondary alcohol + NAD(+) = a ketone + NADH + H(+). This chain is Alcohol dehydrogenase 2 (Adh2), found in Drosophila mulleri (Fruit fly).